A 336-amino-acid chain; its full sequence is Glycerol-3-phosphate dehydrogenase [NAD(P)+] (336 aa).

Positions 14, 15, 35, 36, and 109 each coordinate NADPH. K109 and G139 together coordinate sn-glycerol 3-phosphate. A143 provides a ligand contact to NADPH. Residues K194, D247, S257, R258, and N259 each contribute to the sn-glycerol 3-phosphate site. Catalysis depends on K194, which acts as the Proton acceptor. Residue R258 coordinates NADPH. Residue E284 participates in NADPH binding.

Belongs to the NAD-dependent glycerol-3-phosphate dehydrogenase family.

It localises to the cytoplasm. It carries out the reaction sn-glycerol 3-phosphate + NAD(+) = dihydroxyacetone phosphate + NADH + H(+). It catalyses the reaction sn-glycerol 3-phosphate + NADP(+) = dihydroxyacetone phosphate + NADPH + H(+). It functions in the pathway membrane lipid metabolism; glycerophospholipid metabolism. Functionally, catalyzes the reduction of the glycolytic intermediate dihydroxyacetone phosphate (DHAP) to sn-glycerol 3-phosphate (G3P), the key precursor for phospholipid synthesis. The sequence is that of Glycerol-3-phosphate dehydrogenase [NAD(P)+] from Streptomyces griseus subsp. griseus (strain JCM 4626 / CBS 651.72 / NBRC 13350 / KCC S-0626 / ISP 5235).